Consider the following 298-residue polypeptide: Small ribosomal subunit biogenesis GTPase RsgA 1 (298 aa).

Positions 63 to 224 (QTQLVRPPVA…VADTPGFSSY (162 aa)) constitute a CP-type G domain. GTP-binding positions include 112–115 (AKTD) and 167–175 (GQTGAGKST). C248, C253, H255, and C261 together coordinate Zn(2+).

This sequence belongs to the TRAFAC class YlqF/YawG GTPase family. RsgA subfamily. Monomer. Associates with 30S ribosomal subunit, binds 16S rRNA. The cofactor is Zn(2+).

It is found in the cytoplasm. Functionally, one of several proteins that assist in the late maturation steps of the functional core of the 30S ribosomal subunit. Helps release RbfA from mature subunits. May play a role in the assembly of ribosomal proteins into the subunit. Circularly permuted GTPase that catalyzes slow GTP hydrolysis, GTPase activity is stimulated by the 30S ribosomal subunit. The sequence is that of Small ribosomal subunit biogenesis GTPase RsgA 1 from Lactiplantibacillus plantarum (strain ATCC BAA-793 / NCIMB 8826 / WCFS1) (Lactobacillus plantarum).